Here is a 95-residue protein sequence, read N- to C-terminus: Small ribosomal subunit protein uS19 (95 aa).

This sequence belongs to the universal ribosomal protein uS19 family.

Protein S19 forms a complex with S13 that binds strongly to the 16S ribosomal RNA. The chain is Small ribosomal subunit protein uS19 (rpsS) from Treponema pallidum (strain Nichols).